We begin with the raw amino-acid sequence, 208 residues long: FMN-dependent NADH:quinone oxidoreductase 2 (208 aa).

The protein belongs to the azoreductase type 1 family. As to quaternary structure, homodimer. FMN serves as cofactor.

It catalyses the reaction 2 a quinone + NADH + H(+) = 2 a 1,4-benzosemiquinone + NAD(+). The enzyme catalyses N,N-dimethyl-1,4-phenylenediamine + anthranilate + 2 NAD(+) = 2-(4-dimethylaminophenyl)diazenylbenzoate + 2 NADH + 2 H(+). Quinone reductase that provides resistance to thiol-specific stress caused by electrophilic quinones. Its function is as follows. Also exhibits azoreductase activity. Catalyzes the reductive cleavage of the azo bond in aromatic azo compounds to the corresponding amines. The chain is FMN-dependent NADH:quinone oxidoreductase 2 from Bacillus anthracis.